The primary structure comprises 226 residues: Ribonuclease 3 (226 aa).

The region spanning 6–128 (INRLQRKLGY…LIGGVFLDSN (123 aa)) is the RNase III domain. Glutamate 41 contacts Mg(2+). Residue aspartate 45 is part of the active site. 2 residues coordinate Mg(2+): aspartate 114 and glutamate 117. Glutamate 117 is a catalytic residue. Residues 155-225 (DPKTRLQEYL…AEQALKKLEL (71 aa)) form the DRBM domain.

Belongs to the ribonuclease III family. As to quaternary structure, homodimer. Mg(2+) serves as cofactor.

It is found in the cytoplasm. The enzyme catalyses Endonucleolytic cleavage to 5'-phosphomonoester.. Functionally, digests double-stranded RNA. Involved in the processing of primary rRNA transcript to yield the immediate precursors to the large and small rRNAs (23S and 16S). Processes some mRNAs, and tRNAs when they are encoded in the rRNA operon. Processes pre-crRNA and tracrRNA of type II CRISPR loci if present in the organism. The protein is Ribonuclease 3 of Salmonella typhi.